Here is a 291-residue protein sequence, read N- to C-terminus: Urease accessory protein UreD (291 aa).

Belongs to the UreD family. In terms of assembly, ureD, UreF and UreG form a complex that acts as a GTP-hydrolysis-dependent molecular chaperone, activating the urease apoprotein by helping to assemble the nickel containing metallocenter of UreC. The UreE protein probably delivers the nickel.

It is found in the cytoplasm. Required for maturation of urease via the functional incorporation of the urease nickel metallocenter. This chain is Urease accessory protein UreD, found in Acinetobacter baumannii (strain ATCC 17978 / DSM 105126 / CIP 53.77 / LMG 1025 / NCDC KC755 / 5377).